A 503-amino-acid chain; its full sequence is MAMSAPTVELMDYADVVARYEPVLGMEVHVELSTATKMFCGCPTDFGAEPNTQVCPVCLGLPGSLPVVNEKAVESAIRIGLALNCSITPWGRFARKNYFYPDQPKNYQISQYDEPIATDGHLDVVLDDGSVFRVDIERAHMEEDTGKSVHVGGATGRIHGASHSLLDYNRAGVPLIEIVTKPITGAGERAPEVARAYVTALRDLLKSLGVSDVKMEQGSLRCDANVSLMPVGASEFGTRTETKNVNSLKSVEVAVRYEMRRQAAVLAAGGAIVQETRHFHESDGTTSPGRRKETAEDYRYFPEPDLEPIAPSPEWIEELRATIPEYPWLRRARIQQEWGVSDEVMRDVVNAGALDLIIATVEAGAPANEARSWWVAYLSEKAKERGVALDELPITPAQVAEVVKLVESKTVNSKVAKQVVDFVLAGEGEPAAVVEAKGLGMVSDDSALQAEVEKALAANPDIADKIRAGKVQAAGKIVGDVMKATRGQADAARVRELVLAACS.

Belongs to the GatB/GatE family. GatB subfamily. Heterotrimer of A, B and C subunits.

The catalysed reaction is L-glutamyl-tRNA(Gln) + L-glutamine + ATP + H2O = L-glutaminyl-tRNA(Gln) + L-glutamate + ADP + phosphate + H(+). It catalyses the reaction L-aspartyl-tRNA(Asn) + L-glutamine + ATP + H2O = L-asparaginyl-tRNA(Asn) + L-glutamate + ADP + phosphate + 2 H(+). Allows the formation of correctly charged Asn-tRNA(Asn) or Gln-tRNA(Gln) through the transamidation of misacylated Asp-tRNA(Asn) or Glu-tRNA(Gln) in organisms which lack either or both of asparaginyl-tRNA or glutaminyl-tRNA synthetases. The reaction takes place in the presence of glutamine and ATP through an activated phospho-Asp-tRNA(Asn) or phospho-Glu-tRNA(Gln). The polypeptide is Aspartyl/glutamyl-tRNA(Asn/Gln) amidotransferase subunit B (Nocardia farcinica (strain IFM 10152)).